A 427-amino-acid chain; its full sequence is Glucose-1-phosphate adenylyltransferase (427 aa).

Positions 40, 46, and 52 each coordinate AMP. An alpha-D-glucose 1-phosphate-binding site is contributed by tyrosine 114. Arginine 130 contributes to the AMP binding site. Alpha-D-glucose 1-phosphate is bound by residues glycine 179, 194–195 (EK), and serine 212. Arginine 386 provides a ligand contact to AMP.

Belongs to the bacterial/plant glucose-1-phosphate adenylyltransferase family. Homotetramer.

It catalyses the reaction alpha-D-glucose 1-phosphate + ATP + H(+) = ADP-alpha-D-glucose + diphosphate. Its pathway is glycan biosynthesis; glycogen biosynthesis. Its activity is regulated as follows. Allosterically activated by fructose-1,6-bisphosphate (F16BP) and inhibited by AMP. Its function is as follows. Involved in the biosynthesis of ADP-glucose, a building block required for the elongation reactions to produce glycogen. Catalyzes the reaction between ATP and alpha-D-glucose 1-phosphate (G1P) to produce pyrophosphate and ADP-Glc. This is Glucose-1-phosphate adenylyltransferase from Cronobacter sakazakii (strain ATCC BAA-894) (Enterobacter sakazakii).